Reading from the N-terminus, the 1431-residue chain is Stabilin-2 (1431 aa).

Residues 1–1322 (SLPSLLTRLE…PPTAATAAHS (1322 aa)) lie on the Extracellular side of the membrane. The 129-residue stretch at 2 to 130 (LPSLLTRLEQ…GVIHGLEKVL (129 aa)) folds into the FAS1 domain. N-linked (GlcNAc...) asparagine glycosylation is found at asparagine 112 and asparagine 140. One can recognise a Laminin EGF-like 1 domain in the interval 207-272 (PQCQACPGRG…CSCVHGRCSQ (66 aa)). 18 disulfides stabilise this stretch: cysteine 212–cysteine 226, cysteine 220–cysteine 236, cysteine 238–cysteine 247, cysteine 259–cysteine 270, cysteine 263–cysteine 280, cysteine 282–cysteine 291, cysteine 300–cysteine 310, cysteine 304–cysteine 320, cysteine 322–cysteine 333, cysteine 339–cysteine 352, cysteine 346–cysteine 362, cysteine 364–cysteine 375, cysteine 381–cysteine 394, cysteine 388–cysteine 404, cysteine 406–cysteine 417, cysteine 423–cysteine 436, cysteine 430–cysteine 446, and cysteine 448–cysteine 459. Residues asparagine 231 and asparagine 243 are each glycosylated (N-linked (GlcNAc...) asparagine). 4 EGF-like domains span residues 296–334 (TTDN…TVCT), 335–376 (AINA…IVCL), 377–418 (EINP…KVCS), and 419–460 (LINV…IVCR). N-linked (GlcNAc...) asparagine glycosylation is present at asparagine 301. Asparagine 329 is a glycosylation site (N-linked (GlcNAc...) asparagine). Residue asparagine 437 is glycosylated (N-linked (GlcNAc...) asparagine). FAS1 domains lie at 460–588 (RGSI…DKLL) and 604–745 (VLQN…DCLL). Residue asparagine 607 is glycosylated (N-linked (GlcNAc...) asparagine). The 66-residue stretch at 822-887 (PDCQACPGGP…SCSEHGQCDE (66 aa)) folds into the Laminin EGF-like 2 domain. 6 cysteine pairs are disulfide-bonded: cysteine 827-cysteine 841, cysteine 835-cysteine 851, cysteine 853-cysteine 862, cysteine 874-cysteine 885, cysteine 879-cysteine 895, and cysteine 897-cysteine 906. N-linked (GlcNAc...) asparagine glycosylation is present at asparagine 858. Asparagine 929 carries an N-linked (GlcNAc...) asparagine glycan. 2 consecutive EGF-like domains span residues 947-987 (VVDF…YSCI) and 988-1030 (EIDP…VDCE). Disulfide bonds link cysteine 951/cysteine 964, cysteine 958/cysteine 973, cysteine 975/cysteine 986, cysteine 992/cysteine 1006, cysteine 1000/cysteine 1016, cysteine 1018/cysteine 1029, cysteine 1085/cysteine 1154, and cysteine 1109/cysteine 1130. Residues 1063–1156 (GVFHLRSPLG…SEMWDVFCYR (94 aa)) enclose the Link domain. N-linked (GlcNAc...) asparagine glycans are attached at residues asparagine 1145, asparagine 1161, asparagine 1233, asparagine 1249, and asparagine 1258. An FAS1 4 domain is found at 1176 to 1310 (SGNLLQVLMS…GILHIISEPL (135 aa)). Residues 1323-1343 (GLGTGIFCAVVLVTGAIALAA) traverse the membrane as a helical segment. At 1344 to 1431 (YSYFRLKQRT…QQATTVTVPR (88 aa)) the chain is on the cytoplasmic side. Residues 1368–1378 (WLLASSSPRIS) are interaction with TMSB4X.

As to quaternary structure, interacts with GULP1, heparin, alpha-M/beta-2 integrin (ITGAM and ITGB2), and thymosin beta 4 (TMSB4X). Glycosylated. Post-translationally, proteolytically processed to yield a 175 kDa protein. Initially expressed in all vascular cells, including those of sinusoidal-like structures, vitellin veins, and hepatic veins or sinus venosus, in E13.5 fetal liver. The expression then progressively disappears in the portal and hepatic veins, but the expression in sinusoidals endothelial cells (SECs) is retained and becomes stronger during development.

It localises to the cytoplasm. Its subcellular location is the cell membrane. Phosphatidylserine receptor that enhances the engulfment of apoptotic cells. Hyaluronan receptor that binds to and mediates endocytosis of hyaluronic acid (HA). Also acts, in different species, as a primary systemic scavenger receptor for heparin (Hep), chondroitin sulfate (CS), dermatan sulfate (DS), nonglycosaminoglycan (GAG), acetylated low-density lipoprotein (AcLDL), pro-collagen propeptides and advanced glycation end products (AGE). May serve to maintain tissue integrity by supporting extracellular matrix turnover or it may contribute to maintaining fluidity of bodily liquids by resorption of hyaluronan. Counter receptor which plays an important role in lymphocyte recruitment in the hepatic vasculature. Binds to both Gram-positive and Gram-negative bacteria and may play a role in defense against bacterial infection. The proteolytically processed 175 kDa form also functions as an endocytosis receptor for heparin internalization as well as HA and CS. The chain is Stabilin-2 from Rattus norvegicus (Rat).